The primary structure comprises 1237 residues: MNCRRKPLPLHSNEVQAAESISKDELYSWTLKNVLILFLVQYRASTPSALQTSSFSTPVEKKTNGAFSGSLFSAKEKKDNPKYPKDFIKYLSLALESISMGKEPEYQDQLIRGCFAAFYNNINKSHISKQLKDSRKIEDMFLIFASSVSSELTKRLGTAYDSNLADRITASFIELCKRVTLKGQLASPSSEFVSHLDMYHSKLLNKSEILSTKRVNRGQDQFDLSSFPLLKVFSSVFKVAYSKALLDAEKLFPSIDEAAIAEDIGILIEDLESDACKFSHSVVDFSNYKSYSTWKARELQTLEQHRKIMLSLIPLSSSPNHPIQPIGFPASRKTPTYVPPIARPYFRQLLSLCLEYRLQVTDPVEVKQINTFIRECSIYWRILPSTRCALSMDFAREHLQKGLITSADVLTHFGELHKSLKEWEITYWPKIDVSIFSSALFGIRNALAQLLKKSLLDLLHEKKADFHRWLNIMSICVEDGKVINQDLSPKSEISSVALALQEHCKVIFDEEFDLSKLPSSNFLDEIILASNRISVRIKFLERNCSECIYGVLSLPQIFINIVLPNYIRAALVVAKEYLREKANADINDLTKDMLEIYSDLKQMIHVLQEYHNEEYRIGSFEGFFQPFIDSWLDNVEASAEQWFLRSLEKDNFDENSSEGQYSSSIVDLFHAFHQAFRTLEGFEWEDDLANARFFTRFFRVIYIVLSKYTQWTTQKFFEEANKQDDTSEVQNDNSSSWFSKARNILSGSNEVLPFRFSPTMCILLNNIHFAMHAYEELEQKIDLQRLIEALDVAESTKRHKISATNYLYTIKVVRGEGLHPDGAGKIRTSYIVLTDNKGRRIGKTRPIHSMNPRWDDTFEVKTKDALMITANLWSKGKFNDHEIFGRSSFTLSPKIYGDYLPREEWFDLNPHGELLLRIEMEGEREHIGFYVGRTYHDLERAQREMIKFIVNKMEPVINQNLSTATLKKLLSANTWMDLDKTMTSVTSLLNRTGFSSKSSENVKKEGELTDVQIEAAIYELLDYFDLNFSIIAKHLTKDVFVTVMSYVWDEVVCTTEELLLPPVSVKPINRKPLSPAQMAIVYRWLQFLKDYFYANGEGVKLPVLETDHYKELLRVQEYYDKPTDFLLQECDKIASQLYLSSRMVNNEPVESLPRHSRIKFANKEIYRSGTIRKVHIQTNESELERNERIILRILRMRADSKRFLSKHFQRKGRLLMADAMRNGYVMPLGHLKKLDSR.

Residues 591–712 enclose the MHD1 domain; the sequence is KDMLEIYSDL…IVLSKYTQWT (122 aa). The 121-residue stretch at 786-906 folds into the C2 domain; the sequence is LIEALDVAES…GDYLPREEWF (121 aa). The 117-residue stretch at 1014 to 1130 folds into the MHD2 domain; it reads EAAIYELLDY…KPTDFLLQEC (117 aa).

This is an uncharacterized protein from Schizosaccharomyces pombe (strain 972 / ATCC 24843) (Fission yeast).